Reading from the N-terminus, the 417-residue chain is Serine hydroxymethyltransferase (417 aa).

Residues Leu-121 and 125 to 127 (GHL) each bind (6S)-5,6,7,8-tetrahydrofolate. Lys-229 carries the N6-(pyridoxal phosphate)lysine modification. (6S)-5,6,7,8-tetrahydrofolate is bound at residue 355–357 (SPF).

The protein belongs to the SHMT family. As to quaternary structure, homodimer. Pyridoxal 5'-phosphate is required as a cofactor.

The protein resides in the cytoplasm. The catalysed reaction is (6R)-5,10-methylene-5,6,7,8-tetrahydrofolate + glycine + H2O = (6S)-5,6,7,8-tetrahydrofolate + L-serine. It participates in one-carbon metabolism; tetrahydrofolate interconversion. Its pathway is amino-acid biosynthesis; glycine biosynthesis; glycine from L-serine: step 1/1. Catalyzes the reversible interconversion of serine and glycine with tetrahydrofolate (THF) serving as the one-carbon carrier. This reaction serves as the major source of one-carbon groups required for the biosynthesis of purines, thymidylate, methionine, and other important biomolecules. Also exhibits THF-independent aldolase activity toward beta-hydroxyamino acids, producing glycine and aldehydes, via a retro-aldol mechanism. The chain is Serine hydroxymethyltransferase from Shewanella amazonensis (strain ATCC BAA-1098 / SB2B).